The chain runs to 67 residues: Beta-defensin 103A (67 aa).

The signal sequence occupies residues 1-22; it reads MRIHYLLFALLFLFLVPVPGHG. Cystine bridges form between C33–C62, C40–C55, and C45–C63.

This sequence belongs to the beta-defensin family.

The protein resides in the secreted. In terms of biological role, exhibits antimicrobial activity against Gram-positive and Gram-negative bacteria. The chain is Beta-defensin 103A (DEFB103A) from Pan troglodytes (Chimpanzee).